The primary structure comprises 288 residues: Ribosomal protein L11 methyltransferase (288 aa).

Thr-141, Gly-164, Asp-186, and Asn-227 together coordinate S-adenosyl-L-methionine.

Belongs to the methyltransferase superfamily. PrmA family.

The protein localises to the cytoplasm. It carries out the reaction L-lysyl-[protein] + 3 S-adenosyl-L-methionine = N(6),N(6),N(6)-trimethyl-L-lysyl-[protein] + 3 S-adenosyl-L-homocysteine + 3 H(+). Methylates ribosomal protein L11. The polypeptide is Ribosomal protein L11 methyltransferase (Myxococcus xanthus (strain DK1622)).